We begin with the raw amino-acid sequence, 198 residues long: Proteasome subunit beta type-4 (198 aa).

M1 carries the N-acetylmethionine modification. S76 carries the post-translational modification Phosphoserine.

It belongs to the peptidase T1B family. As to quaternary structure, the 26S proteasome consists of a 20S proteasome core and two 19S regulatory subunits. The 20S proteasome core is composed of 28 subunits that are arranged in four stacked rings, resulting in a barrel-shaped structure. The two end rings are each formed by seven alpha subunits, and the two central rings are each formed by seven beta subunits. The catalytic chamber with the active sites is on the inside of the barrel.

The protein resides in the cytoplasm. The protein localises to the nucleus. In terms of biological role, non-catalytic component of the proteasome which degrades poly-ubiquitinated proteins in the cytoplasm and in the nucleus. It is essential for the regulated turnover of proteins and for the removal of misfolded proteins. The proteasome is a multicatalytic proteinase complex that is characterized by its ability to cleave peptides with Arg, Phe, Tyr, Leu, and Glu adjacent to the leaving group at neutral or slightly basic pH. It has an ATP-dependent proteolytic activity. This subunit has a chymotrypsin-like activity. The chain is Proteasome subunit beta type-4 (PRE1) from Saccharomyces cerevisiae (strain ATCC 204508 / S288c) (Baker's yeast).